The sequence spans 83 residues: Putative membrane protein insertion efficiency factor (83 aa).

The segment at 64–83 is disordered; sequence GGFDPVPLKKDKNSKTTHHH.

The protein belongs to the UPF0161 family.

It is found in the cell membrane. In terms of biological role, could be involved in insertion of integral membrane proteins into the membrane. In Staphylococcus epidermidis (strain ATCC 12228 / FDA PCI 1200), this protein is Putative membrane protein insertion efficiency factor.